We begin with the raw amino-acid sequence, 159 residues long: Nucleotide-binding protein PST_3153 (159 aa).

Belongs to the YajQ family.

Nucleotide-binding protein. The sequence is that of Nucleotide-binding protein PST_3153 from Stutzerimonas stutzeri (strain A1501) (Pseudomonas stutzeri).